We begin with the raw amino-acid sequence, 192 residues long: Peptidyl-tRNA hydrolase (192 aa).

Residue Y18 participates in tRNA binding. The active-site Proton acceptor is H23. TRNA is bound by residues F69, N71, and N117.

It belongs to the PTH family. Monomer.

It is found in the cytoplasm. The catalysed reaction is an N-acyl-L-alpha-aminoacyl-tRNA + H2O = an N-acyl-L-amino acid + a tRNA + H(+). In terms of biological role, hydrolyzes ribosome-free peptidyl-tRNAs (with 1 or more amino acids incorporated), which drop off the ribosome during protein synthesis, or as a result of ribosome stalling. Functionally, catalyzes the release of premature peptidyl moieties from peptidyl-tRNA molecules trapped in stalled 50S ribosomal subunits, and thus maintains levels of free tRNAs and 50S ribosomes. This chain is Peptidyl-tRNA hydrolase, found in Neisseria meningitidis serogroup B (strain ATCC BAA-335 / MC58).